We begin with the raw amino-acid sequence, 453 residues long: GTPase Der (453 aa).

EngA-type G domains are found at residues 3–167 (PIIV…ISEK) and 187–360 (IKVA…EDSK). Residues 9–16 (GRTNVGKS), 57–61 (DTAGL), 119–122 (NKID), 193–200 (GRPNVGKS), 240–244 (DTAGA), and 305–308 (NKCD) contribute to the GTP site. The region spanning 361 to 445 (RKISTSTLIR…PIQIQFKDNE (85 aa)) is the KH-like domain.

The protein belongs to the TRAFAC class TrmE-Era-EngA-EngB-Septin-like GTPase superfamily. EngA (Der) GTPase family. In terms of assembly, associates with the 50S ribosomal subunit.

Functionally, GTPase that plays an essential role in the late steps of ribosome biogenesis. The sequence is that of GTPase Der from Buchnera aphidicola subsp. Acyrthosiphon pisum (strain Tuc7).